Reading from the N-terminus, the 493-residue chain is 6-aminohexanoate-cyclic-dimer hydrolase (493 aa).

Residues K72 and S150 each act as charge relay system in the active site. S174 (acyl-ester intermediate) is an active-site residue.

The protein belongs to the amidase family. As to quaternary structure, homodimer.

It catalyses the reaction 1,8-diazacyclotetradecane-2,9-dione + H2O = N-(6-aminohexanoyl)-6-aminohexanoate. Its pathway is xenobiotic degradation; nylon-6 oligomer degradation. With respect to regulation, strongly inhibited by 1 uM diisopropylphosphofluoridate and 10 uM p-chloromercuribenzoate but scarcely inhibited by 100 mM EDTA in vitro. In terms of biological role, specifically catalyzes the hydrolysis of 6-aminohexanoic acid cyclic dimer (1,8-diazacyclotetradecane-2,9-dione) to form the linear dimer 6-aminohexanoyl-6-aminohexanoic acid. Is inactive on 6-aminohexanoic acid oligomers (degree of polymerization 2 to 6), various other cyclic amides, cyclic diamides, linear amides, oligopeptides, and casein. Allows the bacterium to grow on a medium containing 6-aminohexanoic acid cyclic dimer as the sole carbon and nitrogen sources. The sequence is that of 6-aminohexanoate-cyclic-dimer hydrolase (nylA) from Paenarthrobacter ureafaciens.